Reading from the N-terminus, the 225-residue chain is MKDIIPLLSQLPQDNFFLERSLHNLGYDIIAGTDEVGRGPLAGPVIAAAVILPADCDHHLFQDSKILSHKKRVHLFQLLTEIDAFIGIGTVSEKIIDEINILQASLLAMKLAIEDLASNCSRPSFLLVDGKFKVPIDLAQVALIKGESKSASIAAASIVAKVTRDRYMQDLHSQYPQYGFNTNSGYPTKKHREAIGEFGITCYHRRSFKGVKEYVDISQEKGGRG.

Residues 28–220 (DIIAGTDEVG…VKEYVDISQE (193 aa)) enclose the RNase H type-2 domain. A divalent metal cation contacts are provided by D34, E35, and D129.

It belongs to the RNase HII family. The cofactor is Mn(2+). Requires Mg(2+) as cofactor.

The protein resides in the cytoplasm. It carries out the reaction Endonucleolytic cleavage to 5'-phosphomonoester.. Endonuclease that specifically degrades the RNA of RNA-DNA hybrids. The protein is Ribonuclease HII of Desulfotalea psychrophila (strain LSv54 / DSM 12343).